Here is a 158-residue protein sequence, read N- to C-terminus: RNA pyrophosphohydrolase (158 aa).

Residues 9–151 enclose the Nudix hydrolase domain; sequence PLRNGVGIVV…KLHVYKDVKE (143 aa). A Nudix box motif is present at residues 43 to 64; the sequence is GGVDKGEDYLTAAYRELEEETS.

The protein belongs to the Nudix hydrolase family. RppH subfamily. The cofactor is a divalent metal cation.

Functionally, accelerates the degradation of transcripts by removing pyrophosphate from the 5'-end of triphosphorylated RNA, leading to a more labile monophosphorylated state that can stimulate subsequent ribonuclease cleavage. This is RNA pyrophosphohydrolase from Pelagibacter ubique (strain HTCC1062).